Consider the following 253-residue polypeptide: Imidazole glycerol phosphate synthase subunit HisF (253 aa).

Catalysis depends on residues Asp11 and Asp130.

Belongs to the HisA/HisF family. As to quaternary structure, heterodimer of HisH and HisF.

The protein resides in the cytoplasm. The catalysed reaction is 5-[(5-phospho-1-deoxy-D-ribulos-1-ylimino)methylamino]-1-(5-phospho-beta-D-ribosyl)imidazole-4-carboxamide + L-glutamine = D-erythro-1-(imidazol-4-yl)glycerol 3-phosphate + 5-amino-1-(5-phospho-beta-D-ribosyl)imidazole-4-carboxamide + L-glutamate + H(+). Its pathway is amino-acid biosynthesis; L-histidine biosynthesis; L-histidine from 5-phospho-alpha-D-ribose 1-diphosphate: step 5/9. Its function is as follows. IGPS catalyzes the conversion of PRFAR and glutamine to IGP, AICAR and glutamate. The HisF subunit catalyzes the cyclization activity that produces IGP and AICAR from PRFAR using the ammonia provided by the HisH subunit. The polypeptide is Imidazole glycerol phosphate synthase subunit HisF (Opitutus terrae (strain DSM 11246 / JCM 15787 / PB90-1)).